A 223-amino-acid polypeptide reads, in one-letter code: Small ribosomal subunit protein uS3 (223 aa).

The KH type-2 domain maps to 39–107; the sequence is VREFLKQKLK…PVQVSVEEIR (69 aa).

The protein belongs to the universal ribosomal protein uS3 family. In terms of assembly, part of the 30S ribosomal subunit. Forms a tight complex with proteins S10 and S14.

Binds the lower part of the 30S subunit head. Binds mRNA in the 70S ribosome, positioning it for translation. The sequence is that of Small ribosomal subunit protein uS3 from Methylococcus capsulatus (strain ATCC 33009 / NCIMB 11132 / Bath).